The chain runs to 147 residues: Methylglyoxal synthase (147 aa).

The MGS-like domain occupies 1 to 147 (MKGQRNIGMV…TPYVKRLGAK (147 aa)). Residues H12, K16, 38-41 (TGTT), and 59-60 (SG) each bind substrate. The active-site Proton donor/acceptor is D65. H92 is a binding site for substrate.

It belongs to the methylglyoxal synthase family.

The catalysed reaction is dihydroxyacetone phosphate = methylglyoxal + phosphate. Its function is as follows. Catalyzes the formation of methylglyoxal from dihydroxyacetone phosphate. The sequence is that of Methylglyoxal synthase from Oleidesulfovibrio alaskensis (strain ATCC BAA-1058 / DSM 17464 / G20) (Desulfovibrio alaskensis).